The sequence spans 2958 residues: MEAISQLRGVPLTHQKDFSWVFLVDWILTVVVCLTMIFYMGRIYAYLVSFILEWLLWKRAKIKINVETLRVSLLGGRIHFKNLSVIHKDYTISVLEGSLTWKYWLLNCRKAELIENNKSSSGKKAKLPCKISVECEGLEIFIYNRTVAYDNVINLLSKDERDKFEKYLNEHSFPEPFSDGSSADKLDEDLSESAYTTNSDASIVNDRDYQETDIGKHPKLLMFLPIELKFSRGSLLLGNKFTPSVMILSYESGKGIIDVLPPKERLDLYRNKTQMEFKNFEISIKQNIGYDDAIGLKFKIDRGKVSKLWKTFVRVFQIVTKPVVPKKTKKSAGTSDDNFYHKWKGLSLYKASAGDAKASDLDDVEFDLTNHEYAKFTSILKCPKVTIAYDVDVPGVVPHGAHPTIPDIDGPDVGNNGAPPDFALDVQIHGGSICYGPWAQRQVSHLQRVLSPVVSRTAKPIKKLPPGSRRIYTLFRMNISIMEDTTWRIPTRESSKDPEFLKHYKETNEEYRPFGWMDLRFCKDTYANFNISVCPTVQGFQNNFHVHFLETEIRSSVNHDILLKSKVFDIDGDIGYPLGWNSKAIWIINMKSEQLEAFLLREHITLVADTLSDFSAGDPTPYELFRPFVYKVNWEMEGYSIYLNVNDHNIVNNPLDFNENCYLSLHGDKLSIDVTVPRESILGTYTDMSYEISTPMFRMMLNTPPWNTLNEFMKHKEVGRAYDFTIKGSYLLYSELDIDNVDTLVIECNSKSTVLHCYGFVMRYLTNVKMNYFGEFFNFVTSEEYTGVLGAREVGDVTTKSSVADLASTVDSGYQNSSLKNESEDKGPMKRSDLKRTTNETDIWFTFSVWDGALILPETIYSFDPCIALHFAELVVDFRSCNYYMDIMAVLNGTSIKRHVSKQINEVFDFIRRNNGADEQEHGLLSDLTIHGHRMYGLPPTEPTYFCQWDINLGDLCIDSDIEFIKGFFNSFYKIGFGYNDLENILLYDTETINDMTSLTVHVEKIRIGLKDPVMKSQSVISAESILFTLIDFENEKYSQRIDVKIPKLTISLNCVMGDGVDTSFLKFETKLRFTNFEQYKDIDKKRSEQRRYITIHDSPYHRCPFLLPLFYQDSDTYQNLYGAIAPSSSIPTLPLPTLPDTIDYIIEDIVGEYATLLETTNPFKNIFAETPSTMEPSRASFSEDDNDEEADPSSFKPVAFTEDRNHERDNYVVDVSYILLDVDPLLFIFAKSLLEQLYSENMVQVLDDIEIGIVKRLSNLQEGITSISNIDIHIAYLNLIWQETGEEGFELYLDRIDYQMSEKSLEKNRTNKLLEVAALAKVKTVRVTVNQKKNPDLSEDRPPALSLGIEGFEVWSSTEDRQVNSLNLTSSDITIDESQMEWLFEYCSDQGNLIQEVCTSFNSIQNTRSNSKTELISKLTAASEYYQISHDPYVITKPAFIMRLSKGHVRENRSWKIITRLRHILTYLPDDWQSNIDEVLKEKKYTSAKDAKNIFMSVFSTWRNWEFSDVARSYIYGKLFTAENEKHKQNLIKKLLKCTMGSFYLTVYGEGYEVEHNFVVADANLVVDLTPPVTSLPSNREETIEITGRVGSVKGKFSDRLLKLQDLIPLIAAVGEDDKSDPKKELSKQFKMNTVLLVDKSELQLVMDQTKLMSRTVGGRVSLLWENLKDSTSQAGSLVIFSQKSEVWLKHTSVILGEAQLRDFSVLATTEAWSHKPTILINNQCADLHFRAMSSTEQLVTAITEIRESLMMIKERIKFKPKSKKKSQFVDQKINTVLSCYFSNVSSEVMPLSPFYIRHEAKQLDIYFNKFGSNEILLSIWDTDFFMTSHQTKEQYLRFSFGDIEIKGGISREGYSLINVDISISMIKLTFSEPRRIVNSFLQDEKLASQGINLLYSLKPLFFSSNLPKKEKQAPSIMINWTLDTSITYFGVLVPVASTYFVFELHMLLLSLTNTNNGMLPEETKVTGQFSIENILFLIKERSLPIGLSKLLDFSIKVSTLQRTVDTEQSFQVESSHFRVCLSPDSLLRLMWGAHKLLDLSHYYSRRHAPNIWNTKMFTGKSDKSKEMPINFRSIHILSYKFCIGWIFQYGAGSNPGLMLGYNRLFSAYEKDFGKFTVVDAFFSVANGNTSSTFFSEGNEKDKYNRSFLPNMQISYWFKRCGELKDWFFRFHGEALDVNFVPSFMDVIESTLQSMRAFQELKKNILDVSESLRAENDNSYASTSVESASSSLAPFLDNIRSVNSNFKYDGGVFRVYTYEDIETKSEPSFEIKSPVVTINCTYKHDEDKVKPHKFRTLITVDPTHNTLYAGCAPLLMEFSESLQKMIKKHSTDEKPNFTKPSSQNVDYKRLLDQFDVAVKLTSAKQQLSLSCEPKAKVQADVGFESFLFSMATNEFDSEQPLEFSLTLEHTKASIKHIFSREVSTSFEVGFMDLTLLFTHPDVISMYGTGLVSDLSVFFNVKQLQNLYLFLDIWRFSSILHTRPVQRTVNKEIEMSSLTSTNYADAGTEIPWCFTLIFTNVSGDVDLGPSLGMISLRTQRTWLATDHYNEKRQLLHAFTDGISLTSEGRLSGLFEVANASWLSEVKWPPEKSKNTHPLVSTSLNIDDIAVKAAFDYHMFLIGTISNIHFHLHNEKDAKGVLPDLLQVSFSSDEIILSSTALVVANILDIYNTIVRMRQDNKISYMETLRDSNPGESRQPILYKDILRSLKLLRTDLSVNISSSKVQISPISLFDVEVLVIRIDKVSIRSETHSGKKLKTDLQLQVLDVSAALSTSKEELDEEVGASIAIDDYMHYASKIVGGTIIDIPKLAVHMTTLQEEKTNNLEYLFACSFSDKISVRWNLGPVDFIKEMWTTHVKALAVRRSQVANISFGQTEEELEESIKKEEAASKFNYIALEEPQIEVPQIRDLGDATPPMEWFGVNRKKFPKFTHQTAVIPVQKLVYLAEKQYVKILDDTH.

Over M1 to D17 the chain is Cytoplasmic. Residues F18 to F38 traverse the membrane as a helical; Signal-anchor for type II membrane protein segment. Over Y39–H2958 the chain is Extracellular. N-linked (GlcNAc...) asparagine glycosylation is found at N82, N117, N144, N271, N478, N530, N816, N821, N839, and N892. The tract at residues G813–L834 is disordered. Positions N821–L834 are enriched in basic and acidic residues. Positions M1175–F1196 are disordered. Residues S1183 to D1192 show a composition bias toward acidic residues. Residues N1309, N1368, N1453, N1785, N1921, N2130, N2146, N2280, N2337, N2520, N2578, N2719, and N2869 are each glycosylated (N-linked (GlcNAc...) asparagine).

This sequence belongs to the CSF1 family. As to quaternary structure, interacts with MCD4; CSF1 channels phosphatidylethanolamine to MCD4 in the endoplasmic reticulum at contact sites to support GPI anchor biosynthesis.

Its subcellular location is the cell membrane. It is found in the endoplasmic reticulum membrane. The protein localises to the mitochondrion membrane. Functionally, tube-forming lipid transport protein which provides phosphatidylethanolamine for glycosylphosphatidylinositol (GPI) anchor synthesis in the endoplasmic reticulum. Required for the glucose and other nutrients uptake at low temperature. The chain is Protein CSF1 from Saccharomyces cerevisiae (strain ATCC 204508 / S288c) (Baker's yeast).